A 379-amino-acid polypeptide reads, in one-letter code: Anhydro-N-acetylmuramic acid kinase (379 aa).

9–16 (GTSADGVD) is a binding site for ATP.

Belongs to the anhydro-N-acetylmuramic acid kinase family.

It catalyses the reaction 1,6-anhydro-N-acetyl-beta-muramate + ATP + H2O = N-acetyl-D-muramate 6-phosphate + ADP + H(+). It participates in amino-sugar metabolism; 1,6-anhydro-N-acetylmuramate degradation. Its pathway is cell wall biogenesis; peptidoglycan recycling. Its function is as follows. Catalyzes the specific phosphorylation of 1,6-anhydro-N-acetylmuramic acid (anhMurNAc) with the simultaneous cleavage of the 1,6-anhydro ring, generating MurNAc-6-P. Is required for the utilization of anhMurNAc either imported from the medium or derived from its own cell wall murein, and thus plays a role in cell wall recycling. The sequence is that of Anhydro-N-acetylmuramic acid kinase from Prochlorococcus marinus (strain MIT 9303).